Here is a 368-residue protein sequence, read N- to C-terminus: Peptide chain release factor 2 (368 aa).

At glutamine 250 the chain carries N5-methylglutamine.

It belongs to the prokaryotic/mitochondrial release factor family. Post-translationally, methylated by PrmC. Methylation increases the termination efficiency of RF2.

The protein resides in the cytoplasm. In terms of biological role, peptide chain release factor 2 directs the termination of translation in response to the peptide chain termination codons UGA and UAA. The chain is Peptide chain release factor 2 from Mycolicibacterium smegmatis (strain ATCC 700084 / mc(2)155) (Mycobacterium smegmatis).